We begin with the raw amino-acid sequence, 271 residues long: Ribosomal RNA small subunit methyltransferase A (271 aa).

6 residues coordinate S-adenosyl-L-methionine: histidine 11, leucine 13, glycine 38, glutamate 58, aspartate 86, and asparagine 101.

The protein belongs to the class I-like SAM-binding methyltransferase superfamily. rRNA adenine N(6)-methyltransferase family. RsmA subfamily.

It is found in the cytoplasm. It carries out the reaction adenosine(1518)/adenosine(1519) in 16S rRNA + 4 S-adenosyl-L-methionine = N(6)-dimethyladenosine(1518)/N(6)-dimethyladenosine(1519) in 16S rRNA + 4 S-adenosyl-L-homocysteine + 4 H(+). In terms of biological role, specifically dimethylates two adjacent adenosines (A1518 and A1519) in the loop of a conserved hairpin near the 3'-end of 16S rRNA in the 30S particle. May play a critical role in biogenesis of 30S subunits. The polypeptide is Ribosomal RNA small subunit methyltransferase A (Helicobacter pylori (strain P12)).